The following is a 466-amino-acid chain: Cysteine--tRNA ligase (466 aa).

Cysteine 28 contributes to the Zn(2+) binding site. Positions 30 to 40 match the 'HIGH' region motif; sequence PTVYNYIHIGN. Residues cysteine 208, histidine 233, and glutamate 237 each contribute to the Zn(2+) site. The short motif at 265–269 is the 'KMSKS' region element; the sequence is KMSKS. An ATP-binding site is contributed by lysine 268.

This sequence belongs to the class-I aminoacyl-tRNA synthetase family. In terms of assembly, monomer. The cofactor is Zn(2+).

It is found in the cytoplasm. The enzyme catalyses tRNA(Cys) + L-cysteine + ATP = L-cysteinyl-tRNA(Cys) + AMP + diphosphate. This is Cysteine--tRNA ligase from Staphylococcus aureus (strain Mu3 / ATCC 700698).